The following is a 65-amino-acid chain: Hirudin-3A (65 aa).

The interaction with thrombin active site stretch occupies residues 1–3 (VVY). Intrachain disulfides connect Cys6–Cys14, Cys16–Cys28, and Cys22–Cys39. The interval 39–65 (CVTGEGTPKPQSHNDGDFEEIPEEYLQ) is disordered. Thr45 carries an O-linked (GalNAc...) threonine glycan. Residues 55 to 65 (DFEEIPEEYLQ) form an interaction with fibrinogen-binding exosite of thrombin region. The span at 55–65 (DFEEIPEEYLQ) shows a compositional bias: acidic residues. Position 63 is a sulfotyrosine (Tyr63).

Belongs to the protease inhibitor I14 (hirudin) family.

It localises to the secreted. Hirudin is a potent thrombin-specific protease inhibitor. It forms a stable non-covalent complex with alpha-thrombin, thereby abolishing its ability to cleave fibrinogen. The sequence is that of Hirudin-3A from Hirudo medicinalis (Medicinal leech).